Here is a 339-residue protein sequence, read N- to C-terminus: Anthranilate phosphoribosyltransferase (339 aa).

Residues Gly80, 83–84, Thr88, 90–93, 108–116, and Ser120 contribute to the 5-phospho-alpha-D-ribose 1-diphosphate site; these read GD, NIST, and KHGNRSVSS. Gly80 serves as a coordination point for anthranilate. Ser92 contacts Mg(2+). Asn111 is an anthranilate binding site. Arg166 lines the anthranilate pocket. Asp225 and Glu226 together coordinate Mg(2+).

This sequence belongs to the anthranilate phosphoribosyltransferase family. In terms of assembly, homodimer. Mg(2+) serves as cofactor.

The enzyme catalyses N-(5-phospho-beta-D-ribosyl)anthranilate + diphosphate = 5-phospho-alpha-D-ribose 1-diphosphate + anthranilate. It functions in the pathway amino-acid biosynthesis; L-tryptophan biosynthesis; L-tryptophan from chorismate: step 2/5. In terms of biological role, catalyzes the transfer of the phosphoribosyl group of 5-phosphorylribose-1-pyrophosphate (PRPP) to anthranilate to yield N-(5'-phosphoribosyl)-anthranilate (PRA). This chain is Anthranilate phosphoribosyltransferase, found in Alkaliphilus metalliredigens (strain QYMF).